The chain runs to 293 residues: 4-diphosphocytidyl-2-C-methyl-D-erythritol kinase (293 aa).

The active site involves Lys-16. 99 to 109 (PMGAGLGGGSS) contacts ATP. Asp-141 is an active-site residue.

Belongs to the GHMP kinase family. IspE subfamily.

It carries out the reaction 4-CDP-2-C-methyl-D-erythritol + ATP = 4-CDP-2-C-methyl-D-erythritol 2-phosphate + ADP + H(+). The protein operates within isoprenoid biosynthesis; isopentenyl diphosphate biosynthesis via DXP pathway; isopentenyl diphosphate from 1-deoxy-D-xylulose 5-phosphate: step 3/6. Catalyzes the phosphorylation of the position 2 hydroxy group of 4-diphosphocytidyl-2C-methyl-D-erythritol. This chain is 4-diphosphocytidyl-2-C-methyl-D-erythritol kinase, found in Burkholderia cenocepacia (strain ATCC BAA-245 / DSM 16553 / LMG 16656 / NCTC 13227 / J2315 / CF5610) (Burkholderia cepacia (strain J2315)).